The sequence spans 131 residues: Cystatin-like cysteine protease inhibitor EPIC3 (131 aa).

Positions 1–22 (MAFTRSIALFAGLALAASSAQG) are cleaved as a signal peptide. N-linked (GlcNAc...) asparagine glycosylation occurs at asparagine 33. Positions 71–75 (QTVAG) match the Secondary area of contact motif.

The protein belongs to the cystatin family.

It localises to the secreted. Functionally, secreted effector that interacts with and inhibits host apoplastic pathogenesis-related papain-like cysteine proteases. Inhibition of host proteases by a pathogen extracellular protease inhibitor forms a specific type of defense-counterdefense mechanism between plants and microbial pathogens. The chain is Cystatin-like cysteine protease inhibitor EPIC3 from Phytophthora infestans (strain T30-4) (Potato late blight agent).